The following is a 127-amino-acid chain: Small ribosomal subunit protein uS11 (127 aa).

Belongs to the universal ribosomal protein uS11 family. Part of the 30S ribosomal subunit. Interacts with proteins S7 and S18. Binds to IF-3.

Functionally, located on the platform of the 30S subunit, it bridges several disparate RNA helices of the 16S rRNA. Forms part of the Shine-Dalgarno cleft in the 70S ribosome. The polypeptide is Small ribosomal subunit protein uS11 (Rickettsia bellii (strain RML369-C)).